The sequence spans 245 residues: uncharacterized protein (245 aa).

The first 19 residues, 1–19 (MKLTQFISYAILSLSGVQA), serve as a signal peptide directing secretion.

It localises to the secreted. This is an uncharacterized protein from Arthroderma benhamiae (strain ATCC MYA-4681 / CBS 112371) (Trichophyton mentagrophytes).